A 2890-amino-acid chain; its full sequence is Bifunctional DNA-directed RNA polymerase subunit beta-beta' (2890 aa).

The DNA-directed RNA polymerase subunit beta stretch occupies residues 1-1377 (MSKKIPLKNR…DINIFGDDVD (1377 aa)). The interval 1384–2890 (PIVIKEDDRP…LRTLEDGPKF (1507 aa)) is DNA-directed RNA polymerase subunit beta'. Zn(2+) contacts are provided by Cys1449, Cys1451, Cys1465, and Cys1468. Residues Asp1849, Asp1851, and Asp1853 each contribute to the Mg(2+) site. Residues Cys2179, Cys2253, Cys2260, and Cys2263 each contribute to the Zn(2+) site.

This sequence in the N-terminal section; belongs to the RNA polymerase beta chain family. In the C-terminal section; belongs to the RNA polymerase beta' chain family. The RNAP catalytic core consists of 2 alpha, 1 beta/beta' and 1 omega subunit. When a sigma factor is associated with the core the holoenzyme is formed, which can initiate transcription. Mg(2+) serves as cofactor. Zn(2+) is required as a cofactor.

The enzyme catalyses RNA(n) + a ribonucleoside 5'-triphosphate = RNA(n+1) + diphosphate. Functionally, DNA-dependent RNA polymerase catalyzes the transcription of DNA into RNA using the four ribonucleoside triphosphates as substrates. This is Bifunctional DNA-directed RNA polymerase subunit beta-beta' (rpoBC) from Helicobacter pylori (strain HPAG1).